A 141-amino-acid chain; its full sequence is Hemoglobin subunit alpha (141 aa).

Residues 1–141 (VLSAADKAHV…VSTVLTSKYR (141 aa)) form the Globin domain. Ser3 is subject to Phosphoserine. Residues Lys7 and Lys11 each carry the N6-succinyllysine modification. An N6-acetyllysine; alternate modification is found at Lys16. Residue Lys16 is modified to N6-succinyllysine; alternate. At Tyr24 the chain carries Phosphotyrosine. A Phosphoserine modification is found at Ser35. At Lys40 the chain carries N6-succinyllysine. A Phosphoserine modification is found at Ser49. His58 serves as a coordination point for O2. His87 is a binding site for heme b. Position 108 is a phosphothreonine (Thr108). Position 124 is a phosphoserine (Ser124). A phosphothreonine mark is found at Thr134 and Thr137. Ser138 bears the Phosphoserine mark.

It belongs to the globin family. Heterotetramer of two alpha chains and two beta chains. In terms of tissue distribution, red blood cells.

In terms of biological role, involved in oxygen transport from the lung to the various peripheral tissues. Hemopressin acts as an antagonist peptide of the cannabinoid receptor CNR1. Hemopressin-binding efficiently blocks cannabinoid receptor CNR1 and subsequent signaling. In Bradypus tridactylus (Pale-throated three-toed sloth), this protein is Hemoglobin subunit alpha (HBA).